Reading from the N-terminus, the 128-residue chain is MSEGGGRVSRIFAAPTRLCRWPALIECGVNLTQPLCEWMIQVARDRTLSLAWEVASLLTLSSSEVGLEGVGTIWPSSYSSEENSRNGAEQGRQLSIEGPFQGQNCPSHPAAALPLPMRGESQATSCQV.

Residues 77–87 (SYSSEENSRNG) show a composition bias toward polar residues. The tract at residues 77–128 (SYSSEENSRNGAEQGRQLSIEGPFQGQNCPSHPAAALPLPMRGESQATSCQV) is disordered.

In terms of assembly, interacts with PRDX6.

Its subcellular location is the cytoplasm. The protein resides in the nucleus. The protein is Saitohin (STH) of Pan troglodytes (Chimpanzee).